A 178-amino-acid chain; its full sequence is Colicin-A immunity protein (178 aa).

Residues 1 to 13 (MMNEHSIDTDNRK) lie on the Cytoplasmic side of the membrane. Residues 14-37 (ANNALYLFIIIGLIPLLCIFVVYY) form a helical membrane-spanning segment. The Periplasmic segment spans residues 38–68 (KTPDALLLRKIATSTENLPSITSSYNPLMTK). The helical transmembrane segment at 69-89 (VMDIYCKTAPFLALILYILTF) threads the bilayer. Residues 90–105 (KIRKLINNTDRNTVLR) lie on the Cytoplasmic side of the membrane. A helical transmembrane segment spans residues 106-123 (SCLLSPLVYAAIVYLFCF). Topologically, residues 124 to 142 (RNFELTTAGRPVRLMATND) are periplasmic. Residues 143-165 (ATLLLFYIGLYSIIFFTTYITLF) traverse the membrane as a helical segment. At 166–178 (TPVTAFKLLKKRQ) the chain is on the cytoplasmic side.

It is found in the cell inner membrane. This protein is able to protect a cell, which harbors the plasmid ColA encoding colicin A, against colicin A. In Citrobacter freundii, this protein is Colicin-A immunity protein (cai).